The primary structure comprises 158 residues: 2-C-methyl-D-erythritol 2,4-cyclodiphosphate synthase (158 aa).

2 residues coordinate a divalent metal cation: Asp-9 and His-11. 4-CDP-2-C-methyl-D-erythritol 2-phosphate is bound by residues 9 to 11 (DVH) and 35 to 36 (HS). A divalent metal cation is bound at residue His-43. 4-CDP-2-C-methyl-D-erythritol 2-phosphate is bound by residues 57-59 (DIG), 62-66 (FPDTD), 133-136 (TTTE), Phe-140, and Arg-143.

The protein belongs to the IspF family. As to quaternary structure, homotrimer. Requires a divalent metal cation as cofactor.

It carries out the reaction 4-CDP-2-C-methyl-D-erythritol 2-phosphate = 2-C-methyl-D-erythritol 2,4-cyclic diphosphate + CMP. The protein operates within isoprenoid biosynthesis; isopentenyl diphosphate biosynthesis via DXP pathway; isopentenyl diphosphate from 1-deoxy-D-xylulose 5-phosphate: step 4/6. Involved in the biosynthesis of isopentenyl diphosphate (IPP) and dimethylallyl diphosphate (DMAPP), two major building blocks of isoprenoid compounds. Catalyzes the conversion of 4-diphosphocytidyl-2-C-methyl-D-erythritol 2-phosphate (CDP-ME2P) to 2-C-methyl-D-erythritol 2,4-cyclodiphosphate (ME-CPP) with a corresponding release of cytidine 5-monophosphate (CMP). The chain is 2-C-methyl-D-erythritol 2,4-cyclodiphosphate synthase from Geobacillus kaustophilus (strain HTA426).